A 396-amino-acid polypeptide reads, in one-letter code: Na(+)/H(+) antiporter NhaA 1 (396 aa).

11 consecutive transmembrane segments (helical) span residues 15–35, 60–80, 96–116, 126–146, 155–175, 179–199, 207–227, 255–275, 290–312, 329–349, and 363–383; these read AGIFLLAAAVFALIFSNVGFL, LEFWVNDALMAIFFFSIGLEL, FLPSFAAIGGVIFPAVIFAVI, GWAIPTATDIAFAVGVMALLG, IFVLTLAIMDDLCAIVIIALF, ALNFTYLGLAFVCFLVLLVMC, IPFVIMSILLWIFVLHSGIHA, SLGYFVNYVVLPLFAFANAGV, PLGVMLGLFLGKQLGIFTFSWFL, LYAVAIICGIGFTMALFVDNL, and LAILLGSIISGVVGYFVAKAV.

The protein belongs to the NhaA Na(+)/H(+) (TC 2.A.33) antiporter family.

The protein localises to the cell inner membrane. It carries out the reaction Na(+)(in) + 2 H(+)(out) = Na(+)(out) + 2 H(+)(in). In terms of biological role, na(+)/H(+) antiporter that extrudes sodium in exchange for external protons. The protein is Na(+)/H(+) antiporter NhaA 1 of Campylobacter hominis (strain ATCC BAA-381 / DSM 21671 / CCUG 45161 / LMG 19568 / NCTC 13146 / CH001A).